The sequence spans 188 residues: Elongation factor P (188 aa).

K34 is modified (N6-(3,6-diaminohexanoyl)-5-hydroxylysine).

Belongs to the elongation factor P family. Post-translationally, may be beta-lysylated on the epsilon-amino group of Lys-34 by the combined action of EpmA and EpmB, and then hydroxylated on the C5 position of the same residue by EpmC (if this protein is present). Lysylation is critical for the stimulatory effect of EF-P on peptide-bond formation. The lysylation moiety may extend toward the peptidyltransferase center and stabilize the terminal 3-CCA end of the tRNA. Hydroxylation of the C5 position on Lys-34 may allow additional potential stabilizing hydrogen-bond interactions with the P-tRNA.

It localises to the cytoplasm. The protein operates within protein biosynthesis; polypeptide chain elongation. In terms of biological role, involved in peptide bond synthesis. Alleviates ribosome stalling that occurs when 3 or more consecutive Pro residues or the sequence PPG is present in a protein, possibly by augmenting the peptidyl transferase activity of the ribosome. Modification of Lys-34 is required for alleviation. This chain is Elongation factor P, found in Stenotrophomonas maltophilia (strain R551-3).